The primary structure comprises 403 residues: Argininosuccinate synthase (403 aa).

Residues Ala-13–Ser-21 and Ala-40 contribute to the ATP site. Residues Tyr-92 and Ser-97 each contribute to the L-citrulline site. Position 122 (Gly-122) interacts with ATP. L-aspartate-binding residues include Thr-124, Asn-128, and Asp-129. Position 128 (Asn-128) interacts with L-citrulline. Arg-132, Ser-181, Ser-190, Glu-266, and Tyr-278 together coordinate L-citrulline.

It belongs to the argininosuccinate synthase family. Type 1 subfamily. Homotetramer.

The protein resides in the cytoplasm. It catalyses the reaction L-citrulline + L-aspartate + ATP = 2-(N(omega)-L-arginino)succinate + AMP + diphosphate + H(+). It participates in amino-acid biosynthesis; L-arginine biosynthesis; L-arginine from L-ornithine and carbamoyl phosphate: step 2/3. The sequence is that of Argininosuccinate synthase from Aliivibrio salmonicida (strain LFI1238) (Vibrio salmonicida (strain LFI1238)).